A 167-amino-acid polypeptide reads, in one-letter code: Leptin (167 aa).

The first 21 residues, methionine 1–alanine 21, serve as a signal peptide directing secretion. Residues cysteine 117 and cysteine 167 are joined by a disulfide bond.

It belongs to the leptin family.

It is found in the secreted. Its function is as follows. Key player in the regulation of energy balance and body weight control. Once released into the circulation, has central and peripheral effects by binding LEPR, found in many tissues, which results in the activation of several major signaling pathways. In the hypothalamus, acts as an appetite-regulating factor that induces a decrease in food intake and an increase in energy consumption by inducing anorexinogenic factors and suppressing orexigenic neuropeptides, also regulates bone mass and secretion of hypothalamo-pituitary-adrenal hormones. In the periphery, increases basal metabolism, influences reproductive function, regulates pancreatic beta-cell function and insulin secretion, is pro-angiogenic for endothelial cell and affects innate and adaptive immunity. In the arcuate nucleus of the hypothalamus, activates by depolarization POMC neurons inducing FOS and SOCS3 expression to release anorexigenic peptides and inhibits by hyperpolarization NPY neurons inducing SOCS3 with a consequent reduction on release of orexigenic peptides. In addition to its known satiety inducing effect, has a modulatory role in nutrient absorption. In the intestine, reduces glucose absorption by enterocytes by activating PKC and leading to a sequential activation of p38, PI3K and ERK signaling pathways which exerts an inhibitory effect on glucose absorption. Acts as a growth factor on certain tissues, through the activation of different signaling pathways increases expression of genes involved in cell cycle regulation such as CCND1, via JAK2-STAT3 pathway, or VEGFA, via MAPK1/3 and PI3K-AKT1 pathways. May also play an apoptotic role via JAK2-STAT3 pathway and up-regulation of BIRC5 expression. Pro-angiogenic, has mitogenic activity on vascular endothelial cells and plays a role in matrix remodeling by regulating the expression of matrix metalloproteinases (MMPs) and tissue inhibitors of metalloproteinases (TIMPs). In innate immunity, modulates the activity and function of neutrophils by increasing chemotaxis and the secretion of oxygen radicals. Increases phagocytosis by macrophages and enhances secretion of pro-inflammatory mediators. Increases cytotoxic ability of NK cells. Plays a pro-inflammatory role, in synergy with IL1B, by inducing NOS2 which promotes the production of IL6, IL8 and Prostaglandin E2, through a signaling pathway that involves JAK2, PI3K, MAP2K1/MEK1 and MAPK14/p38. In adaptive immunity, promotes the switch of memory T-cells towards T helper-1 cell immune responses. Increases CD4(+)CD25(-) T-cell proliferation and reduces autophagy during TCR (T-cell receptor) stimulation, through MTOR signaling pathway activation and BCL2 up-regulation. This Halichoerus grypus (Gray seal) protein is Leptin (LEP).